Here is a 394-residue protein sequence, read N- to C-terminus: 8-amino-7-oxononanoate synthase (394 aa).

A substrate-binding site is contributed by Arg22. 113-114 is a pyridoxal 5'-phosphate binding site; the sequence is GY. A substrate-binding site is contributed by His138. Ser184, His212, and Thr240 together coordinate pyridoxal 5'-phosphate. An N6-(pyridoxal phosphate)lysine modification is found at Lys243. Substrate is bound at residue Thr359.

It belongs to the class-II pyridoxal-phosphate-dependent aminotransferase family. BioF subfamily. Homodimer. Pyridoxal 5'-phosphate is required as a cofactor.

It catalyses the reaction 6-carboxyhexanoyl-[ACP] + L-alanine + H(+) = (8S)-8-amino-7-oxononanoate + holo-[ACP] + CO2. It participates in cofactor biosynthesis; biotin biosynthesis. Its function is as follows. Catalyzes the decarboxylative condensation of pimeloyl-[acyl-carrier protein] and L-alanine to produce 8-amino-7-oxononanoate (AON), [acyl-carrier protein], and carbon dioxide. The protein is 8-amino-7-oxononanoate synthase of Janthinobacterium sp. (strain Marseille) (Minibacterium massiliensis).